Reading from the N-terminus, the 245-residue chain is 3-oxoacyl-[acyl-carrier-protein] reductase FabG (245 aa).

NADP(+)-binding positions include 12 to 15 (GANR) and Thr-38. Ca(2+)-binding residues include Lys-51 and Gly-54. NADP(+) is bound by residues 60–61 (DI) and Asn-87. Position 139 (Ser-139) interacts with substrate. Asn-146 contributes to the Ca(2+) binding site. Residue Tyr-152 is the Proton acceptor of the active site. Residues 152–156 (YSAAK) and Ile-185 each bind NADP(+). Residues Gln-234 and Val-235 each contribute to the Ca(2+) site.

It belongs to the short-chain dehydrogenases/reductases (SDR) family. Homotetramer.

The enzyme catalyses a (3R)-hydroxyacyl-[ACP] + NADP(+) = a 3-oxoacyl-[ACP] + NADPH + H(+). It functions in the pathway lipid metabolism; fatty acid biosynthesis. In terms of biological role, catalyzes the NADPH-dependent reduction of beta-ketoacyl-ACP substrates to beta-hydroxyacyl-ACP products, the first reductive step in the elongation cycle of fatty acid biosynthesis. The sequence is that of 3-oxoacyl-[acyl-carrier-protein] reductase FabG (fabG) from Buchnera aphidicola subsp. Baizongia pistaciae (strain Bp).